Consider the following 499-residue polypeptide: Probable UTP--glucose-1-phosphate uridylyltransferase (499 aa).

Residues 108–111, Lys-122, Gln-185, and Gly-214 each bind UTP; that span reads LNGG. 110 to 111 is a binding site for substrate; it reads GG. Substrate is bound by residues His-215 and 243-245; that span reads NID. The UTP site is built by Asp-245 and Lys-387.

It belongs to the UDPGP type 1 family.

It localises to the cytoplasm. It is found in the nucleus. It carries out the reaction alpha-D-glucose 1-phosphate + UTP + H(+) = UDP-alpha-D-glucose + diphosphate. Its function is as follows. Plays a central role as a glucosyl donor in cellular metabolic pathways. The protein is Probable UTP--glucose-1-phosphate uridylyltransferase of Schizosaccharomyces pombe (strain 972 / ATCC 24843) (Fission yeast).